The chain runs to 61 residues: Large ribosomal subunit protein uL30 (61 aa).

It belongs to the universal ribosomal protein uL30 family. Part of the 50S ribosomal subunit.

The protein is Large ribosomal subunit protein uL30 of Rhizorhabdus wittichii (strain DSM 6014 / CCUG 31198 / JCM 15750 / NBRC 105917 / EY 4224 / RW1) (Sphingomonas wittichii).